Consider the following 139-residue polypeptide: D-ribose pyranase (139 aa).

His-20 serves as the catalytic Proton donor. Substrate-binding positions include Asp-28, His-106, and 128-130 (YAN).

The protein belongs to the RbsD / FucU family. RbsD subfamily. In terms of assembly, homodecamer.

The protein resides in the cytoplasm. The catalysed reaction is beta-D-ribopyranose = beta-D-ribofuranose. The protein operates within carbohydrate metabolism; D-ribose degradation; D-ribose 5-phosphate from beta-D-ribopyranose: step 1/2. In terms of biological role, catalyzes the interconversion of beta-pyran and beta-furan forms of D-ribose. This Glaesserella parasuis serovar 5 (strain SH0165) (Haemophilus parasuis) protein is D-ribose pyranase.